Here is a 365-residue protein sequence, read N- to C-terminus: Putative F-box/kelch-repeat protein At3g16880 (365 aa).

The F-box domain occupies 1-47 (MTKMSKLPNDLLEEILSRSPLYSMRAIRLTCKKWNTLAKEESFTKKQ). Kelch repeat units follow at residues 98–149 (RVYH…TKKS) and 155–205 (ILSS…VKGN).

The sequence is that of Putative F-box/kelch-repeat protein At3g16880 from Arabidopsis thaliana (Mouse-ear cress).